The following is a 516-amino-acid chain: Coiled-coil domain-containing protein 82 (516 aa).

Residues M1–S13 are compositionally biased toward basic residues. A disordered region spans residues M1 to D265. Over residues D38–D62 the composition is skewed to acidic residues. Residues I78–N96 are compositionally biased toward basic and acidic residues. A compositionally biased stretch (polar residues) spans K98–S107. Basic and acidic residues predominate over residues M113–H135. Phosphoserine is present on residues S170 and S194. T202 is modified (phosphothreonine). Residues E204–N232 adopt a coiled-coil conformation. Over residues H215 to R226 the composition is skewed to basic and acidic residues. The span at T248–D265 shows a compositional bias: acidic residues. Position 301 is a phosphoserine (S301).

This chain is Coiled-coil domain-containing protein 82 (Ccdc82), found in Rattus norvegicus (Rat).